The following is a 333-amino-acid chain: Protein-methionine-sulfoxide reductase catalytic subunit MsrP (333 aa).

Residues 1 to 43 (MHKHRKPTEADVTPESLFYQRRRVLKALGISAAALSLPLSAQA) constitute a signal peptide (tat-type signal). Mo-molybdopterin is bound by residues Asn87, 90-91 (YE), Cys145, Thr180, Asn232, Arg237, and 248-250 (NIK).

Belongs to the MsrP family. As to quaternary structure, heterodimer of a catalytic subunit (MsrP) and a heme-binding subunit (MsrQ). Mo-molybdopterin serves as cofactor. Predicted to be exported by the Tat system. The position of the signal peptide cleavage has not been experimentally proven.

Its subcellular location is the periplasm. The catalysed reaction is L-methionyl-[protein] + a quinone + H2O = L-methionyl-(S)-S-oxide-[protein] + a quinol. The enzyme catalyses L-methionyl-[protein] + a quinone + H2O = L-methionyl-(R)-S-oxide-[protein] + a quinol. Its function is as follows. Part of the MsrPQ system that repairs oxidized periplasmic proteins containing methionine sulfoxide residues (Met-O), using respiratory chain electrons. Thus protects these proteins from oxidative-stress damage caused by reactive species of oxygen and chlorine generated by the host defense mechanisms. MsrPQ is essential for the maintenance of envelope integrity under bleach stress, rescuing a wide series of structurally unrelated periplasmic proteins from methionine oxidation. The catalytic subunit MsrP is non-stereospecific, being able to reduce both (R-) and (S-) diastereoisomers of methionine sulfoxide. The chain is Protein-methionine-sulfoxide reductase catalytic subunit MsrP from Pectobacterium atrosepticum (strain SCRI 1043 / ATCC BAA-672) (Erwinia carotovora subsp. atroseptica).